The sequence spans 105 residues: MAVAGSWQPPRPCEVYRAEWELCRSVGHVLHHYYVHGKRPDCRQWLRDLTNCREWEESRSAEAQRSLCESEQVRVQAAQKHTLVWALRQRPPTDWNLPLPQEKDK.

The protein belongs to the UPF0545 family. As to quaternary structure, interacts with RTN4 isoform A/Nogo-A; the interaction results in enhanced RTN4-mediated inhibition of AMPA receptor clustering. Also interacts with NCAM1, RANBP2 and CCT8. Rapidly degraded by proteolysis following neuronal stimulation, resulting in increased AMPA receptor clustering. As to expression, in the postnatal brain, expressed diffusely throughout the hippocampus at a low level at 8 weeks (at protein level). At 16 weeks, strongly expressed in the stratum lucidum of the hippocampus (at protein level). In developing and aging brain, expression is strongest in hippocampus, especially in areas CA3 and CA2, throughout the dorsoventral axis.

It is found in the synapse. Its subcellular location is the synaptic cleft. Negatively regulates long-term potentiation and modulates adult synaptic plasticity. Stabilizes the interaction of RTN4 isoform A/Nogo-A with its receptors, inhibiting clustering of postsynaptic AMPA receptors at synaptic sites. Upon neuronal stimulation, degraded at synapses, reducing RTN4 signaling and allowing AMPA receptor clustering at individual synapses. This is Synaptic plasticity regulator PANTS from Mus musculus (Mouse).